The following is a 354-amino-acid chain: Histidinol-phosphate aminotransferase (354 aa).

At Lys-222 the chain carries N6-(pyridoxal phosphate)lysine.

Belongs to the class-II pyridoxal-phosphate-dependent aminotransferase family. Histidinol-phosphate aminotransferase subfamily. Homodimer. Requires pyridoxal 5'-phosphate as cofactor.

The enzyme catalyses L-histidinol phosphate + 2-oxoglutarate = 3-(imidazol-4-yl)-2-oxopropyl phosphate + L-glutamate. It functions in the pathway amino-acid biosynthesis; L-histidine biosynthesis; L-histidine from 5-phospho-alpha-D-ribose 1-diphosphate: step 7/9. The polypeptide is Histidinol-phosphate aminotransferase (Staphylococcus carnosus (strain TM300)).